We begin with the raw amino-acid sequence, 239 residues long: Geranylgeranylglyceryl phosphate synthase (239 aa).

D19 and S48 together coordinate Mg(2+). Residues 167–173 (YLEAGSG), 197–198 (GG), and 219–220 (GT) each bind sn-glycerol 1-phosphate.

This sequence belongs to the GGGP/HepGP synthase family. Group II subfamily. Requires Mg(2+) as cofactor.

It is found in the cytoplasm. It carries out the reaction sn-glycerol 1-phosphate + (2E,6E,10E)-geranylgeranyl diphosphate = sn-3-O-(geranylgeranyl)glycerol 1-phosphate + diphosphate. Its pathway is membrane lipid metabolism; glycerophospholipid metabolism. In terms of biological role, prenyltransferase that catalyzes the transfer of the geranylgeranyl moiety of geranylgeranyl diphosphate (GGPP) to the C3 hydroxyl of sn-glycerol-1-phosphate (G1P). This reaction is the first ether-bond-formation step in the biosynthesis of archaeal membrane lipids. The protein is Geranylgeranylglyceryl phosphate synthase of Methanopyrus kandleri (strain AV19 / DSM 6324 / JCM 9639 / NBRC 100938).